We begin with the raw amino-acid sequence, 300 residues long: Sulfate adenylyltransferase subunit 2 (300 aa).

The disordered stretch occupies residues 281-300 (RAIDRDEAGSMEKKKREGYF).

The protein belongs to the PAPS reductase family. CysD subfamily. Heterodimer composed of CysD, the smaller subunit, and CysN.

The enzyme catalyses sulfate + ATP + H(+) = adenosine 5'-phosphosulfate + diphosphate. It participates in sulfur metabolism; hydrogen sulfide biosynthesis; sulfite from sulfate: step 1/3. With CysN forms the ATP sulfurylase (ATPS) that catalyzes the adenylation of sulfate producing adenosine 5'-phosphosulfate (APS) and diphosphate, the first enzymatic step in sulfur assimilation pathway. APS synthesis involves the formation of a high-energy phosphoric-sulfuric acid anhydride bond driven by GTP hydrolysis by CysN coupled to ATP hydrolysis by CysD. This is Sulfate adenylyltransferase subunit 2 from Brucella melitensis biotype 2 (strain ATCC 23457).